Here is a 365-residue protein sequence, read N- to C-terminus: Phosphate acyltransferase (365 aa).

The protein belongs to the PlsX family. As to quaternary structure, homodimer. Probably interacts with PlsY.

The protein resides in the cytoplasm. The enzyme catalyses a fatty acyl-[ACP] + phosphate = an acyl phosphate + holo-[ACP]. The protein operates within lipid metabolism; phospholipid metabolism. Catalyzes the reversible formation of acyl-phosphate (acyl-PO(4)) from acyl-[acyl-carrier-protein] (acyl-ACP). This enzyme utilizes acyl-ACP as fatty acyl donor, but not acyl-CoA. The protein is Phosphate acyltransferase of Picosynechococcus sp. (strain ATCC 27264 / PCC 7002 / PR-6) (Agmenellum quadruplicatum).